The primary structure comprises 435 residues: MLDIRYMRKNSAEVKQRLEYRGVNPETIDELLELDQKRRDLIQKVESLKAQRNDVSDKIAFAKRQKEDASEAILQMKQVGADIKSLDNEQTLLDEQVREIAAHLPNMAAFDVPVGPDESANVEQRKWAPEEYGSRPHALEEASWVKAHYEIGENLGILDFERGAKVSGARFLYYVGDGARLERAVYNFMLDEHRQEGYTEMITPIVVNDSAMFGTGQYPKFQDDAYRVEGLNQTYIPTAEVPLTNYYSGEELPSEDLPIKFTALSPSFRKEAGSAGKDTRGLIRLHQFNKVEMVKFTKPEDSYEELEKMTLDAENILQKLNLPYHVIVLSTGDMGFSAAKTYDIEVWMPQQNVYREISSVSNTEDFQARRMHITYRDADNKLQLVHTLNGSGLAVGRTVAAILENYQNEDGSVTIPEVLRPYLAGQEKLEPTTHH.

Residue 238–240 (TAE) participates in L-serine binding. Residue 269-271 (RKE) participates in ATP binding. Residue glutamate 292 participates in L-serine binding. 356–359 (EISS) contributes to the ATP binding site. L-serine is bound at residue serine 391.

It belongs to the class-II aminoacyl-tRNA synthetase family. Type-1 seryl-tRNA synthetase subfamily. In terms of assembly, homodimer. The tRNA molecule binds across the dimer.

The protein localises to the cytoplasm. The enzyme catalyses tRNA(Ser) + L-serine + ATP = L-seryl-tRNA(Ser) + AMP + diphosphate + H(+). The catalysed reaction is tRNA(Sec) + L-serine + ATP = L-seryl-tRNA(Sec) + AMP + diphosphate + H(+). It functions in the pathway aminoacyl-tRNA biosynthesis; selenocysteinyl-tRNA(Sec) biosynthesis; L-seryl-tRNA(Sec) from L-serine and tRNA(Sec): step 1/1. Catalyzes the attachment of serine to tRNA(Ser). Is also able to aminoacylate tRNA(Sec) with serine, to form the misacylated tRNA L-seryl-tRNA(Sec), which will be further converted into selenocysteinyl-tRNA(Sec). The polypeptide is Serine--tRNA ligase (Leuconostoc mesenteroides subsp. mesenteroides (strain ATCC 8293 / DSM 20343 / BCRC 11652 / CCM 1803 / JCM 6124 / NCDO 523 / NBRC 100496 / NCIMB 8023 / NCTC 12954 / NRRL B-1118 / 37Y)).